The following is an 83-amino-acid chain: Cytotoxin homolog 5V (83 aa).

An N-terminal signal peptide occupies residues methionine 1–threonine 21. Intrachain disulfides connect cysteine 24/cysteine 43, cysteine 36/cysteine 61, cysteine 65/cysteine 76, and cysteine 77/cysteine 82.

The protein belongs to the three-finger toxin family. Short-chain subfamily. Orphan group XV sub-subfamily. In terms of tissue distribution, expressed by the venom gland.

It localises to the secreted. Its subcellular location is the target cell membrane. Has low cytotoxic activity. The polypeptide is Cytotoxin homolog 5V (Naja atra (Chinese cobra)).